A 236-amino-acid chain; its full sequence is uncharacterized protein (236 aa).

Positions 5-73 (QSTVENAKEK…DRKGWFVTQP (69 aa)) constitute an HTH gntR-type domain. A DNA-binding region (H-T-H motif) is located at residues 33–52 (ERELGELLGIKRMTLRQALL).

This is an uncharacterized protein from Escherichia coli O157:H7.